Reading from the N-terminus, the 2121-residue chain is PAM2 domain-containing protein UPA2 (2121 aa).

Positions 1–17 match the PAM2 1 motif; sequence MEGSSLNVAAPVFKPSG. Disordered stretches follow at residues 14–46, 262–302, 375–397, 475–507, 522–543, and 586–819; these read KPSG…AVHA, QPED…SALT, AATT…PPST, ARRR…SSGG, ANSD…QKPL, and DLGR…QFSR. Residues 339–599 are effector domain; it reads PWPYSLGLPD…GFGYEPQSPN (261 aa). Residues 596–607 are compositionally biased toward polar residues; that stretch reads QSPNAAPNGTTS. Acidic residues-rich tracts occupy residues 626-637 and 646-658; these read EENDELGFDGEE and EDAD…EEPN. Residues 679–689 are compositionally biased toward basic and acidic residues; the sequence is DGHDRYADDNQ. Over residues 690 to 712 the composition is skewed to polar residues; sequence SHASNDDSLQDSLTPSDEQFSNP. Basic and acidic residues predominate over residues 719–735; the sequence is REERILRRQHRAAERAA. Basic residues predominate over residues 736 to 745; it reads RRERKQRQRG. Composition is skewed to polar residues over residues 749–758 and 777–788; these read SDNTLPSSSI and NPRNGNTISNPS. 2 short sequence motifs (PAM2) span residues 858–874 and 920–937; these read SGIS…KFGG and TNAA…PGLF. The segment covering 950-960 has biased composition (polar residues); sequence NSLSASPSIAV. Residues 950 to 1012 form a disordered region; it reads NSLSASPSIA…PSPPRPKASA (63 aa). Basic and acidic residues predominate over residues 966-981; the sequence is GADHRETENRDMQGRE. Positions 1046-1063 match the PAM2 4 motif; it reads SHESRLTADAPSFVPTWA. 3 disordered regions span residues 1076 to 1096, 1119 to 1261, and 1337 to 1369; these read KRPS…KDLP, SKDD…EEES, and SHAR…NSSL. A compositionally biased stretch (polar residues) spans 1198–1207; the sequence is HSPSISQTSD. Positions 1248–1261 are enriched in acidic residues; it reads GGNDEDDYEDEEES. A compositionally biased stretch (polar residues) spans 1345 to 1369; that stretch reads ETQSTIRPLRQRNSSSDVKTANSSL. Residues 1783 to 2054 adopt a coiled-coil conformation; sequence LEKQAQANAD…EAKLQTLTAS (272 aa). A disordered region spans residues 2099-2121; it reads SFASTAGSQGKKEVEVDEGGWWS. A GWW motif is present at residues 2118 to 2120; the sequence is GWW.

It belongs to the UPA1 PAM2 domain-binding protein family. As to quaternary structure, might form homodimers via its C-terminal coiled-coil domain. Part of large ribonucleoprotein complexes (mRNPs) containing RNA-binding proteins RRM4 and PAB1, endosome-binding protein UPA1, core scaffold protein UPA2 and associated factor GRP1. Interacts (via PAM2 motifs) with PAB1.

The protein localises to the cytoplasm. It localises to the cytoskeleton. Its subcellular location is the endosome. Core component of endosomal mRNA transport and appears to carry out crucial scaffolding functions. The endosomal mRNA transport regulates polarity of the infectious hyphae by transporting a broad spectrum of cargo mRNAs from the nucleus to cell poles. The protein is PAM2 domain-containing protein UPA2 of Mycosarcoma maydis (Corn smut fungus).